Reading from the N-terminus, the 291-residue chain is Diaminopimelate epimerase (291 aa).

Substrate contacts are provided by N13, Q46, and N66. C75 serves as the catalytic Proton donor. Substrate contacts are provided by residues 76–77 (GN), N156, N189, and 207–208 (ER). The Proton acceptor role is filled by C216. Residue 217 to 218 (GS) participates in substrate binding.

The protein belongs to the diaminopimelate epimerase family. Homodimer.

It localises to the cytoplasm. It carries out the reaction (2S,6S)-2,6-diaminopimelate = meso-2,6-diaminopimelate. The protein operates within amino-acid biosynthesis; L-lysine biosynthesis via DAP pathway; DL-2,6-diaminopimelate from LL-2,6-diaminopimelate: step 1/1. Functionally, catalyzes the stereoinversion of LL-2,6-diaminopimelate (L,L-DAP) to meso-diaminopimelate (meso-DAP), a precursor of L-lysine and an essential component of the bacterial peptidoglycan. The protein is Diaminopimelate epimerase of Rhodospirillum centenum (strain ATCC 51521 / SW).